The chain runs to 475 residues: Ribulose bisphosphate carboxylase large chain (475 aa).

The propeptide occupies 1 to 2; it reads MS. At Pro-3 the chain carries N-acetylproline. Position 14 is an N6,N6,N6-trimethyllysine (Lys-14). Positions 123 and 173 each coordinate substrate. Lys-175 (proton acceptor) is an active-site residue. Lys-177 contacts substrate. 3 residues coordinate Mg(2+): Lys-201, Asp-203, and Glu-204. Lys-201 is subject to N6-carboxylysine. His-294 functions as the Proton acceptor in the catalytic mechanism. The substrate site is built by Arg-295, His-327, and Ser-379.

It belongs to the RuBisCO large chain family. Type I subfamily. As to quaternary structure, heterohexadecamer of 8 large chains and 8 small chains. The cofactor is Mg(2+).

It is found in the plastid. The protein resides in the chloroplast. It catalyses the reaction 2 (2R)-3-phosphoglycerate + 2 H(+) = D-ribulose 1,5-bisphosphate + CO2 + H2O. The catalysed reaction is D-ribulose 1,5-bisphosphate + O2 = 2-phosphoglycolate + (2R)-3-phosphoglycerate + 2 H(+). In terms of biological role, ruBisCO catalyzes two reactions: the carboxylation of D-ribulose 1,5-bisphosphate, the primary event in carbon dioxide fixation, as well as the oxidative fragmentation of the pentose substrate in the photorespiration process. Both reactions occur simultaneously and in competition at the same active site. In Nymphaea alba (White water-lily), this protein is Ribulose bisphosphate carboxylase large chain.